Consider the following 150-residue polypeptide: MTKIKIVAVGSLSPKFKSLDEEYAKQVGHFCSLSLSELKEFSEEKNIEVKKEKETKLILDALMPNSKVILLSLKGKQIDSIAFSKLIEMNTNQSFTFIIGGSDGVCEEHFESAQKLSFSQMTFPHQLFRIMLIEQIYRAFMILNNSKYHK.

S-adenosyl-L-methionine is bound by residues leucine 71, glycine 100, and 118 to 123 (FSQMTF).

Belongs to the RNA methyltransferase RlmH family. In terms of assembly, homodimer.

The protein localises to the cytoplasm. The enzyme catalyses pseudouridine(1915) in 23S rRNA + S-adenosyl-L-methionine = N(3)-methylpseudouridine(1915) in 23S rRNA + S-adenosyl-L-homocysteine + H(+). In terms of biological role, specifically methylates the pseudouridine at position 1915 (m3Psi1915) in 23S rRNA. The chain is Ribosomal RNA large subunit methyltransferase H from Mycoplasmopsis agalactiae (strain NCTC 10123 / CIP 59.7 / PG2) (Mycoplasma agalactiae).